A 410-amino-acid polypeptide reads, in one-letter code: Arginine deiminase (410 aa).

The active-site Amidino-cysteine intermediate is Cys-400.

It belongs to the arginine deiminase family.

It is found in the cytoplasm. The catalysed reaction is L-arginine + H2O = L-citrulline + NH4(+). The protein operates within amino-acid degradation; L-arginine degradation via ADI pathway; carbamoyl phosphate from L-arginine: step 1/2. The polypeptide is Arginine deiminase (Bacillus cereus (strain ATCC 10987 / NRS 248)).